A 593-amino-acid polypeptide reads, in one-letter code: Uncoordinated protein 58 (593 aa).

A run of 6 helical transmembrane segments spans residues Val186–Leu206, Thr291–Val311, Val320–Ile340, Pro402–Ile422, Phe430–Val450, and Ile455–Val475.

The protein belongs to the two pore domain potassium channel (TC 1.A.1.8) family.

Its subcellular location is the membrane. In terms of biological role, has a role in mobility, possibly in the transport of potassium in muscles. This Caenorhabditis briggsae protein is Uncoordinated protein 58.